We begin with the raw amino-acid sequence, 739 residues long: Gamma-tubulin complex component 4 homolog (739 aa).

The protein belongs to the TUBGCP family.

The protein localises to the cytoplasm. The protein resides in the cytoskeleton. Its subcellular location is the microtubule organizing center. Gamma-tubulin complex is necessary for microtubule nucleation at the microtubule organizing centers (MTOCs). In Medicago truncatula (Barrel medic), this protein is Gamma-tubulin complex component 4 homolog (85P).